The sequence spans 191 residues: Putative glutathione-dependent formaldehyde-activating enzyme (191 aa).

The 147-residue stretch at 20-166 (FAGGKLRCHC…FKALGLQTYD (147 aa)) folds into the CENP-V/GFA domain. 7 residues coordinate Zn(2+): cysteine 27, cysteine 29, cysteine 48, cysteine 50, cysteine 53, cysteine 95, and cysteine 98.

It belongs to the Gfa family. Zn(2+) serves as cofactor.

The enzyme catalyses S-(hydroxymethyl)glutathione = glutathione + formaldehyde. The protein operates within one-carbon metabolism; formaldehyde degradation; formate from formaldehyde (glutathione route): step 1/3. In terms of biological role, catalyzes the condensation of formaldehyde and glutathione to S-hydroxymethylglutathione. The protein is Putative glutathione-dependent formaldehyde-activating enzyme of Penicillium rubens (strain ATCC 28089 / DSM 1075 / NRRL 1951 / Wisconsin 54-1255) (Penicillium chrysogenum).